Reading from the N-terminus, the 153-residue chain is uncharacterized protein (153 aa).

This is an uncharacterized protein from Escherichia coli (strain K12).